A 141-amino-acid chain; its full sequence is Transcriptional regulator MraZ (141 aa).

SpoVT-AbrB domains follow at residues 5–47 (TFNI…KPQD) and 76–119 (ANFV…DKKL).

It belongs to the MraZ family. Homooctamer. Forms a ring.

The protein localises to the cytoplasm. It localises to the nucleoid. This is Transcriptional regulator MraZ from Mycoplasma pneumoniae (strain ATCC 29342 / M129 / Subtype 1) (Mycoplasmoides pneumoniae).